The following is a 206-amino-acid chain: Cytochrome b6-f complex iron-sulfur subunit, chloroplastic (206 aa).

Residues 1-29 (MAMLSSRRVAAPAKASAIRRSRVMPVVRA) constitute a chloroplast transit peptide. Residues 39 to 68 (MNKRNIMNLILAGGAGLPITTLALGYGAFF) traverse the membrane as a helical segment. The Rieske domain occupies 92–188 (AGEWLKTHLA…CDVAESGLVT (97 aa)). [2Fe-2S] cluster is bound by residues Cys-134, His-136, Cys-152, and His-155. An intrachain disulfide couples Cys-139 to Cys-154.

It belongs to the Rieske iron-sulfur protein family. The 4 large subunits of the cytochrome b6-f complex are cytochrome b6, subunit IV (17 kDa polypeptide, petD), cytochrome f and the Rieske protein, while the 4 small subunits are petG, petL, petM and petN. The complex functions as a dimer. The cofactor is [2Fe-2S] cluster.

The protein resides in the plastid. It localises to the chloroplast thylakoid membrane. It catalyses the reaction 2 oxidized [plastocyanin] + a plastoquinol + 2 H(+)(in) = 2 reduced [plastocyanin] + a plastoquinone + 4 H(+)(out). In terms of biological role, component of the cytochrome b6-f complex, which mediates electron transfer between photosystem II (PSII) and photosystem I (PSI), cyclic electron flow around PSI, and state transitions. The protein is Cytochrome b6-f complex iron-sulfur subunit, chloroplastic (petC) of Chlamydomonas reinhardtii (Chlamydomonas smithii).